The chain runs to 303 residues: Quinolinate synthase (303 aa).

Residues His-24 and Ser-41 each contribute to the iminosuccinate site. Position 86 (Cys-86) interacts with [4Fe-4S] cluster. Iminosuccinate-binding positions include 112 to 114 (YIN) and Ser-129. Residue Cys-172 coordinates [4Fe-4S] cluster. Residues 198-200 (HPE) and Thr-215 contribute to the iminosuccinate site. Position 260 (Cys-260) interacts with [4Fe-4S] cluster.

This sequence belongs to the quinolinate synthase family. Type 2 subfamily. The cofactor is [4Fe-4S] cluster.

The protein localises to the cytoplasm. The catalysed reaction is iminosuccinate + dihydroxyacetone phosphate = quinolinate + phosphate + 2 H2O + H(+). Its pathway is cofactor biosynthesis; NAD(+) biosynthesis; quinolinate from iminoaspartate: step 1/1. Catalyzes the condensation of iminoaspartate with dihydroxyacetone phosphate to form quinolinate. In Caldicellulosiruptor bescii (strain ATCC BAA-1888 / DSM 6725 / KCTC 15123 / Z-1320) (Anaerocellum thermophilum), this protein is Quinolinate synthase.